A 207-amino-acid chain; its full sequence is Large ribosomal subunit protein uL4 (207 aa).

The tract at residues 45 to 78 (RQGTHAVKNRSARRGGGRKPWRQKGTGRARQGSI) is disordered. Over residues 51–71 (VKNRSARRGGGRKPWRQKGTG) the composition is skewed to basic residues.

The protein belongs to the universal ribosomal protein uL4 family. As to quaternary structure, part of the 50S ribosomal subunit.

Its function is as follows. One of the primary rRNA binding proteins, this protein initially binds near the 5'-end of the 23S rRNA. It is important during the early stages of 50S assembly. It makes multiple contacts with different domains of the 23S rRNA in the assembled 50S subunit and ribosome. Functionally, forms part of the polypeptide exit tunnel. The polypeptide is Large ribosomal subunit protein uL4 (Lactiplantibacillus plantarum (strain ATCC BAA-793 / NCIMB 8826 / WCFS1) (Lactobacillus plantarum)).